A 241-amino-acid polypeptide reads, in one-letter code: Leucyl/phenylalanyl-tRNA--protein transferase (241 aa).

Belongs to the L/F-transferase family.

The protein resides in the cytoplasm. The catalysed reaction is N-terminal L-lysyl-[protein] + L-leucyl-tRNA(Leu) = N-terminal L-leucyl-L-lysyl-[protein] + tRNA(Leu) + H(+). It carries out the reaction N-terminal L-arginyl-[protein] + L-leucyl-tRNA(Leu) = N-terminal L-leucyl-L-arginyl-[protein] + tRNA(Leu) + H(+). The enzyme catalyses L-phenylalanyl-tRNA(Phe) + an N-terminal L-alpha-aminoacyl-[protein] = an N-terminal L-phenylalanyl-L-alpha-aminoacyl-[protein] + tRNA(Phe). In terms of biological role, functions in the N-end rule pathway of protein degradation where it conjugates Leu, Phe and, less efficiently, Met from aminoacyl-tRNAs to the N-termini of proteins containing an N-terminal arginine or lysine. This chain is Leucyl/phenylalanyl-tRNA--protein transferase, found in Colwellia psychrerythraea (strain 34H / ATCC BAA-681) (Vibrio psychroerythus).